The primary structure comprises 610 residues: UvrABC system protein C (610 aa).

Positions 16-94 constitute a GIY-YIG domain; that stretch reads SQPGVYRMYD…IKLYQPRYNV (79 aa). Residues 204–239 enclose the UVR domain; the sequence is DQVLNQLVARMEQASGDLRFEEAGRLRDQIQAVRRV.

Belongs to the UvrC family. In terms of assembly, interacts with UvrB in an incision complex.

The protein resides in the cytoplasm. The UvrABC repair system catalyzes the recognition and processing of DNA lesions. UvrC both incises the 5' and 3' sides of the lesion. The N-terminal half is responsible for the 3' incision and the C-terminal half is responsible for the 5' incision. The protein is UvrABC system protein C of Erwinia tasmaniensis (strain DSM 17950 / CFBP 7177 / CIP 109463 / NCPPB 4357 / Et1/99).